Here is a 374-residue protein sequence, read N- to C-terminus: Probable tuliposide A-converting enzyme b6, amyloplastic (374 aa).

Residues 1-68 (MSVALFCGPP…TNSSLSPSPT (68 aa)) constitute an amyloplast transit peptide. Serine 226 functions as the Acyl-ester intermediate in the catalytic mechanism. Residues aspartate 316 and histidine 348 each act as charge relay system in the active site.

It belongs to the AB hydrolase superfamily. In terms of assembly, homodimer.

The protein resides in the plastid. It is found in the amyloplast. It carries out the reaction 6-tuliposide A = tulipalin A + D-glucose. Its function is as follows. Lactone-forming carboxylesterases, specifically catalyzing intramolecular transesterification, but not hydrolysis. Involved in the biosynthesis of tulipalins, defensive chemicals that show antimicrobial activities against a broad range of strains of bacteria and fungi. Substrates are 6-tuliposide A &gt; 6-tuliposide B. The chain is Probable tuliposide A-converting enzyme b6, amyloplastic (TCEA-B6) from Tulipa gesneriana (Garden tulip).